The sequence spans 247 residues: ATP synthase subunit a, chloroplastic (247 aa).

5 helical membrane-spanning segments follow: residues 38-58, 95-115, 134-154, 199-219, and 220-240; these read QVLITSWVVIAILLGSATIAV, VPFIGTMFLFIFVSNWSGALL, INTTVALALLTSVAYFYAGLT, LVVVVLVSLVPLVVPIPVMLL, and GLFTSGIQALIFATLAAAYIG.

This sequence belongs to the ATPase A chain family. In terms of assembly, F-type ATPases have 2 components, CF(1) - the catalytic core - and CF(0) - the membrane proton channel. CF(1) has five subunits: alpha(3), beta(3), gamma(1), delta(1), epsilon(1). CF(0) has four main subunits: a, b, b' and c.

The protein resides in the plastid. It is found in the chloroplast thylakoid membrane. In terms of biological role, key component of the proton channel; it plays a direct role in the translocation of protons across the membrane. The chain is ATP synthase subunit a, chloroplastic from Solanum lycopersicum (Tomato).